We begin with the raw amino-acid sequence, 327 residues long: E3 ubiquitin ligase Rnf121 (327 aa).

Ala-2 bears the N-acetylalanine mark. The next 5 helical transmembrane spans lie at 50 to 70, 79 to 99, 100 to 120, 148 to 168, and 172 to 192; these read MHAEMVLILIATLVVAQLLLV, SYNMVTLFQMWVVPLYFTVKL, HWWRFLVIWIFFSAVTAFVTF, ATGIVGYMAVMFTLFGLNLLF, and PEDAMDFGISLLFYGLYYGVL. An RING-type; atypical zinc finger spans residues 226-276; that stretch reads CAVCGQQIFVDVNEEGIIENTYRLSCNHVFHEFCIRGWCIVGKKQTCPYCK. The chain crosses the membrane as a helical span at residues 306 to 326; that stretch reads LVAWQPVIIGLVQGISYILGL.

This sequence belongs to the RNF121 family.

It is found in the endoplasmic reticulum membrane. It catalyses the reaction S-ubiquitinyl-[E2 ubiquitin-conjugating enzyme]-L-cysteine + [acceptor protein]-L-lysine = [E2 ubiquitin-conjugating enzyme]-L-cysteine + N(6)-ubiquitinyl-[acceptor protein]-L-lysine.. Its pathway is protein modification; protein ubiquitination. Functionally, E3 ubiquitin ligase which accepts ubiquitin and transfers it to substrates thereby promoting their degradation by the endoplasmic reticulum-associated degradation (ERAD) pathway which is a pathway involved in ubiquitin-dependent degradation of misfolded endoplasmic reticulum proteins. May regulate the unfolded protein response to reduce endoplasmic reticulum stress. The sequence is that of E3 ubiquitin ligase Rnf121 (Rnf121) from Mus musculus (Mouse).